The chain runs to 955 residues: Kinesin heavy chain isoform 5C (955 aa).

In terms of domain architecture, Kinesin motor spans 8–327 (SIKVMCRFRP…LMFGQRAKTI (320 aa)). 8 residues coordinate ATP: Gln-87, Ser-89, Ser-90, Gly-91, Lys-92, Thr-93, His-94, and Lys-99. The interval 174 to 315 (VSSPEEVMDV…PSVFNEAETK (142 aa)) is microtubule-binding. Residues 332–366 (SVNLELTAEEWKKKYEKEKEKNKALKSVIQHLEVE) adopt a coiled-coil conformation. The residue at position 403 (Thr-403) is a Phosphothreonine. 2 coiled-coil regions span residues 413-538 (KEKY…LQEL) and 590-913 (ISKM…KNMA). A globular region spans residues 859 to 955 (CELPKLEKRL…GSSNSTHYQK (97 aa)). The segment at 909–955 (AKNMARRAHSAQIAKPIRPGHYPASSPTAVHAVRGGGGSSNSTHYQK) is disordered.

This sequence belongs to the TRAFAC class myosin-kinesin ATPase superfamily. Kinesin family. Kinesin subfamily. Oligomer composed of two heavy chains and two light chains. Interacts with GRIP1. Interacts with TRAK1. Interacts with ZFYVE27. Interacts with KLC3.

The protein localises to the cytoplasm. It localises to the cytoskeleton. Its subcellular location is the cell projection. The protein resides in the dendrite. The enzyme catalyses ATP + H2O = ADP + phosphate + H(+). In terms of biological role, microtubule-associated force-producing protein that may play a role in organelle transport. Has ATPase activity. Involved in synaptic transmission. Mediates dendritic trafficking of mRNAs. Required for anterograde axonal transportation of MAPK8IP3/JIP3 which is essential for MAPK8IP3/JIP3 function in axon elongation. This Rattus norvegicus (Rat) protein is Kinesin heavy chain isoform 5C (Kif5c).